Consider the following 867-residue polypeptide: Leucine--tRNA ligase (867 aa).

The 'HIGH' region motif lies at 40-51; that stretch reads PYPSGAGLHVGH. The 'KMSKS' region signature appears at 638 to 642; that stretch reads KMSKS. Lys641 is an ATP binding site.

It belongs to the class-I aminoacyl-tRNA synthetase family.

It is found in the cytoplasm. The enzyme catalyses tRNA(Leu) + L-leucine + ATP = L-leucyl-tRNA(Leu) + AMP + diphosphate. This is Leucine--tRNA ligase from Leptospira biflexa serovar Patoc (strain Patoc 1 / Ames).